The primary structure comprises 402 residues: Zinc finger protein 587B (402 aa).

In terms of domain architecture, KRAB spans 15–91 (VTFEDVAVKF…PVTGVSPKKA (77 aa)). Residues 92 to 114 (HPCEMCGPILGDILHVADHQGTH) form a C2H2-type 1 zinc finger. A C2H2-type 2; degenerate zinc finger spans residues 120–142 (HRCEAWGNKLYDSGNFHQHQNEH). Glycyl lysine isopeptide (Lys-Gly) (interchain with G-Cter in SUMO2) cross-links involve residues Lys177, Lys200, and Lys253. 5 consecutive C2H2-type zinc fingers follow at residues 242-264 (YVCC…QRVH), 270-292 (YECG…QQFH), 298-320 (YGCE…QKVH), 326-348 (YECG…QRIH), and 354-383 (YKCG…WVDH). Lys366 is covalently cross-linked (Glycyl lysine isopeptide (Lys-Gly) (interchain with G-Cter in SUMO2)).

Belongs to the krueppel C2H2-type zinc-finger protein family.

The protein resides in the nucleus. Its function is as follows. May be involved in transcriptional regulation. The polypeptide is Zinc finger protein 587B (ZNF587B) (Homo sapiens (Human)).